The sequence spans 261 residues: Carnitinyl-CoA dehydratase (261 aa).

The active-site Nucleophile is E111. E131 serves as the catalytic Proton acceptor.

The protein belongs to the enoyl-CoA hydratase/isomerase family.

The catalysed reaction is (R)-carnitinyl-CoA = crotonobetainyl-CoA + H2O. The protein operates within amine and polyamine metabolism; carnitine metabolism. Catalyzes the reversible dehydration of L-carnitinyl-CoA to crotonobetainyl-CoA. The polypeptide is Carnitinyl-CoA dehydratase (Citrobacter koseri (strain ATCC BAA-895 / CDC 4225-83 / SGSC4696)).